A 105-amino-acid polypeptide reads, in one-letter code: Iron-sulfur cluster assembly protein CyaY (105 aa).

The protein belongs to the frataxin family.

Its function is as follows. Involved in iron-sulfur (Fe-S) cluster assembly. May act as a regulator of Fe-S biogenesis. This Paraburkholderia phymatum (strain DSM 17167 / CIP 108236 / LMG 21445 / STM815) (Burkholderia phymatum) protein is Iron-sulfur cluster assembly protein CyaY.